Here is a 60-residue protein sequence, read N- to C-terminus: UPF0509 protein Ent638_2183 (60 aa).

This sequence belongs to the UPF0509 family.

The polypeptide is UPF0509 protein Ent638_2183 (Enterobacter sp. (strain 638)).